Consider the following 98-residue polypeptide: Phosphoribosyl-ATP pyrophosphatase (98 aa).

It belongs to the PRA-PH family.

Its subcellular location is the cytoplasm. The enzyme catalyses 1-(5-phospho-beta-D-ribosyl)-ATP + H2O = 1-(5-phospho-beta-D-ribosyl)-5'-AMP + diphosphate + H(+). It participates in amino-acid biosynthesis; L-histidine biosynthesis; L-histidine from 5-phospho-alpha-D-ribose 1-diphosphate: step 2/9. In Pelotomaculum thermopropionicum (strain DSM 13744 / JCM 10971 / SI), this protein is Phosphoribosyl-ATP pyrophosphatase.